A 215-amino-acid polypeptide reads, in one-letter code: Histone H1.1 (215 aa).

The interval 1 to 43 (MSETVPPAPAASAAPEKPLAGKKAKKPAKAAAASKKKPAGPSV) is disordered. Ser2 bears the N-acetylserine mark. Phosphoserine is present on residues Ser2 and Ser12. N6-acetyllysine is present on Lys17. Positions 20–38 (AGKKAKKPAKAAAASKKKP) are enriched in basic residues. N6-(beta-hydroxybutyryl)lysine is present on Lys37. The H15 domain occupies 39 to 112 (AGPSVSELIV…GASGSFKLNK (74 aa)). Ser44 carries the post-translational modification Phosphoserine. Lys55 carries the post-translational modification N6-(beta-hydroxybutyryl)lysine. Arg57 carries the post-translational modification Citrulline. The residue at position 67 (Lys67) is an N6-(beta-hydroxybutyryl)lysine. Position 78 is an N6-acetyllysine (Lys78). N6-(beta-hydroxybutyryl)lysine is present on Lys88. Lys93 is subject to N6-(beta-hydroxybutyryl)lysine; alternate. N6-acetyllysine; alternate is present on Lys93. The disordered stretch occupies residues 94–215 (GTLVQTKGTG…KPKKAAPKKK (122 aa)). The residue at position 107 (Ser107) is a Phosphoserine. Lys109 bears the N6-(beta-hydroxybutyryl)lysine mark. Residues 122–147 (GASKVATKTKATGASKKLKKATGASK) are compositionally biased toward low complexity. Lys125 is subject to N6-acetyllysine. Basic residues-rich tracts occupy residues 148-181 (KSVK…KKVA) and 188-215 (KAVK…PKKK). The residue at position 204 (Thr204) is a Phosphothreonine.

The protein belongs to the histone H1/H5 family. Interacts with DFFB. H1 histones are progressively phosphorylated during the cell cycle, becoming maximally phosphorylated during late G2 phase and M phase, and being dephosphorylated sharply thereafter. In terms of processing, citrullination at Arg-57 (H1R54ci) by PADI4 takes place within the DNA-binding site of H1 and results in its displacement from chromatin and global chromatin decondensation, thereby promoting pluripotency and stem cell maintenance.

It is found in the nucleus. It localises to the chromosome. Its function is as follows. Histone H1 protein binds to linker DNA between nucleosomes forming the macromolecular structure known as the chromatin fiber. Histones H1 are necessary for the condensation of nucleosome chains into higher-order structured fibers. Also acts as a regulator of individual gene transcription through chromatin remodeling, nucleosome spacing and DNA methylation. The polypeptide is Histone H1.1 (Homo sapiens (Human)).